The primary structure comprises 298 residues: Probable phosphite transport system-binding protein HtxB (298 aa).

An N-terminal signal peptide occupies residues 1–33 (MQVFTLFSKFKKALTRAILAFIATIIVCTPAQA).

It belongs to the phosphate/phosphite/phosphonate binding protein family.

Probably forms part of a binding-protein-dependent hypophosphite transporter. This is Probable phosphite transport system-binding protein HtxB (htxB) from Stutzerimonas stutzeri (Pseudomonas stutzeri).